The primary structure comprises 576 residues: Arginine--tRNA ligase (576 aa).

The 'HIGH' region motif lies at 126–136 (ANPTGPMHIGH).

It belongs to the class-I aminoacyl-tRNA synthetase family. In terms of assembly, monomer.

It localises to the cytoplasm. The enzyme catalyses tRNA(Arg) + L-arginine + ATP = L-arginyl-tRNA(Arg) + AMP + diphosphate. This Rickettsia typhi (strain ATCC VR-144 / Wilmington) protein is Arginine--tRNA ligase.